The following is an 883-amino-acid chain: Aldehyde-alcohol dehydrogenase (883 aa).

The interval 13 to 456 (KLVAEKHVDE…DNVSAINLLN (444 aa)) is aldehyde dehydrogenase. NAD(+)-binding positions include 121-126 (ITPTTN), Gly206, and Gly224. Catalysis depends on Cys257, which acts as the Nucleophile. NAD(+) is bound by residues Glu355, Leu435, and 438 to 443 (GSYGRN). Residues 457-464 (IKKVGRRR) form a linker region. NAD(+) contacts are provided by residues Asp500, Asp534, 561–565 (GSPMD), 612–613 (TT), Val625, Lys634, and Leu653. Residues Asp668, His672, His736, and His750 each coordinate Fe cation.

It in the N-terminal section; belongs to the aldehyde dehydrogenase family. This sequence in the C-terminal section; belongs to the iron-containing alcohol dehydrogenase family. The cofactor is Fe(2+).

It carries out the reaction an aldehyde + NAD(+) + H2O = a carboxylate + NADH + 2 H(+). The enzyme catalyses ethanol + NAD(+) = acetaldehyde + NADH + H(+). Its function is as follows. Has alcohol dehydrogenase activity. Has aldehyde dehydrogenase activity. Plays a role in enhancing virulence in mice, under ethanol stress conditions, perhaps by inducing expression of pneumolysin (Ply) and increasing production of hydrogen peroxide H(2)O(2). May be considered a potential virulence factor. This chain is Aldehyde-alcohol dehydrogenase, found in Streptococcus pneumoniae serotype 2 (strain D39 / NCTC 7466).